The chain runs to 191 residues: Pentapeptide repeat protein MfpA (191 aa).

The region spanning cysteine 115–glycine 154 is the Pentapeptide repeat domain.

The protein belongs to the pentapeptide repeat protein family. Homodimer. Probably interacts with DNA gyrase.

In terms of biological role, when present on multicopy plasmids confers increased resistance to fluoroquinolone antibiotics such as ciprofloxacin and sparfloxacin but not the quinolone nalidixic acid. Forms a structure that exhibits size, shape and electrostatic similarity to B-form DNA; it may bind to DNA gyrase which is postulated to protect it from fluoroquinolones. The sequence is that of Pentapeptide repeat protein MfpA from Mycolicibacterium smegmatis (strain ATCC 700084 / mc(2)155) (Mycobacterium smegmatis).